The primary structure comprises 102 residues: Protein translation factor SUI1 homolog (102 aa).

The protein belongs to the SUI1 family.

This is Protein translation factor SUI1 homolog from Methanosarcina acetivorans (strain ATCC 35395 / DSM 2834 / JCM 12185 / C2A).